A 360-amino-acid polypeptide reads, in one-letter code: UDP-N-acetylglucosamine--N-acetylmuramyl-(pentapeptide) pyrophosphoryl-undecaprenol N-acetylglucosamine transferase (360 aa).

UDP-N-acetyl-alpha-D-glucosamine-binding positions include 15–17 (TGG), asparagine 127, arginine 163, serine 191, isoleucine 249, 268–273 (ALTVSE), and glutamine 293.

It belongs to the glycosyltransferase 28 family. MurG subfamily.

The protein localises to the cell inner membrane. It carries out the reaction di-trans,octa-cis-undecaprenyl diphospho-N-acetyl-alpha-D-muramoyl-L-alanyl-D-glutamyl-meso-2,6-diaminopimeloyl-D-alanyl-D-alanine + UDP-N-acetyl-alpha-D-glucosamine = di-trans,octa-cis-undecaprenyl diphospho-[N-acetyl-alpha-D-glucosaminyl-(1-&gt;4)]-N-acetyl-alpha-D-muramoyl-L-alanyl-D-glutamyl-meso-2,6-diaminopimeloyl-D-alanyl-D-alanine + UDP + H(+). It participates in cell wall biogenesis; peptidoglycan biosynthesis. In terms of biological role, cell wall formation. Catalyzes the transfer of a GlcNAc subunit on undecaprenyl-pyrophosphoryl-MurNAc-pentapeptide (lipid intermediate I) to form undecaprenyl-pyrophosphoryl-MurNAc-(pentapeptide)GlcNAc (lipid intermediate II). This chain is UDP-N-acetylglucosamine--N-acetylmuramyl-(pentapeptide) pyrophosphoryl-undecaprenol N-acetylglucosamine transferase, found in Proteus mirabilis (strain HI4320).